Here is a 342-residue protein sequence, read N- to C-terminus: Flotillin-like protein FloA (342 aa).

Helical transmembrane passes span 18 to 38 (FFIF…GKFI) and 39 to 59 (SLWF…IIGM).

This sequence belongs to the flotillin-like FloA family. Homooligomerizes.

It localises to the cell membrane. It is found in the membrane raft. In terms of biological role, found in functional membrane microdomains (FMM) that may be equivalent to eukaryotic membrane rafts. FMMs are highly dynamic and increase in number as cells age. Flotillins are thought to be important factors in membrane fluidity. The sequence is that of Flotillin-like protein FloA from Protochlamydia amoebophila (strain UWE25).